A 222-amino-acid chain; its full sequence is MRAISILSGGMDSAVATALMMDEYEIHAITFDYGQRSARMELEYARRLSEHLGIEHTTLDLQWLGRLGGSVLTAGGDIPSPSNLDDTVECLETARKVWVPGRNLVFTSIGVSFAEAMDAGAVIVGWDLEEAETFPDNSEEFLDAFNRLLEIGTLDGVRVVAPVIGMTKREIVEAGHEVGLPFELTYSCYAGDRVHCGVCESCMRRRRAFELAGIDDPTEYRE.

ATP is bound at residue 7 to 17 (LSGGMDSAVAT). Positions 188, 196, 199, and 202 each coordinate Zn(2+).

The protein belongs to the QueC family. The cofactor is Zn(2+).

It catalyses the reaction 7-carboxy-7-deazaguanine + NH4(+) + ATP = 7-cyano-7-deazaguanine + ADP + phosphate + H2O + H(+). Its pathway is purine metabolism; 7-cyano-7-deazaguanine biosynthesis. In terms of biological role, catalyzes the ATP-dependent conversion of 7-carboxy-7-deazaguanine (CDG) to 7-cyano-7-deazaguanine (preQ(0)). This is 7-cyano-7-deazaguanine synthase from Methanothermobacter thermautotrophicus (strain ATCC 29096 / DSM 1053 / JCM 10044 / NBRC 100330 / Delta H) (Methanobacterium thermoautotrophicum).